A 390-amino-acid polypeptide reads, in one-letter code: UPF0229 protein ABC1477 (390 aa).

Disordered regions lie at residues 1–31 and 81–118; these read MEKD…RHQE and VGQG…QAGE. Positions 7–16 are enriched in polar residues; sequence RQFTISQENW. 2 stretches are compositionally biased toward basic and acidic residues: residues 22–31 and 86–100; these read GFQDQRRHQE and GDSK…DPNG.

It belongs to the UPF0229 family.

In Shouchella clausii (strain KSM-K16) (Alkalihalobacillus clausii), this protein is UPF0229 protein ABC1477.